The primary structure comprises 385 residues: Homoserine O-succinyltransferase (385 aa).

The region spanning 51–359 (NAILICHALS…EATEGHDAFL (309 aa)) is the AB hydrolase-1 domain. Ser-157 (nucleophile) is an active-site residue. Position 227 (Arg-227) interacts with substrate. Catalysis depends on residues Asp-322 and His-355. Asp-356 is a substrate binding site.

The protein belongs to the AB hydrolase superfamily. MetX family. As to quaternary structure, homodimer.

It localises to the cytoplasm. The enzyme catalyses L-homoserine + succinyl-CoA = O-succinyl-L-homoserine + CoA. Its pathway is amino-acid biosynthesis; L-methionine biosynthesis via de novo pathway; O-succinyl-L-homoserine from L-homoserine: step 1/1. Transfers a succinyl group from succinyl-CoA to L-homoserine, forming succinyl-L-homoserine. This is Homoserine O-succinyltransferase from Marinomonas sp. (strain MWYL1).